Here is an 814-residue protein sequence, read N- to C-terminus: Glycosyltransferase GlyD (814 aa).

Residues 1-264 (MNKTIVLAGD…SQILQHHMGE (264 aa)) are GT8 domain. Residues 8–13 (AGDRNY) and 102–103 (DS) each bind UDP. Residues Asp-102, Asp-104, and His-226 each coordinate Mn(2+). UDP is bound at residue 226–232 (HFTTYRK). A GT-D domain region spans residues 542–814 (EKPLDIIQVK…NSQIVARILN (273 aa)).

This sequence in the N-terminal section; belongs to the glycosyltransferase 8 family. In the C-terminal section; belongs to the GT-D family.

Its pathway is protein modification; protein glycosylation. Functionally, involved in the polymorphic O-glycosylation of the serine-rich repeat protein PsrP. Catalyzes the third step in glycosylation PsrP in this bacteria. Transfers glucose from UDP-glucose to the terminal glucose moiety of already-glycosylated PsrP (using truncated substrates with PsrP SSR1-GlcNAc-Glc); the C-terminal GT-D domain is sufficient for this reaction in vitro. Also transfers galactose from UDP-galactose to the terminal glucose moiety of already-glycosylated PsrP; the C-terminal GT-D domain is also sufficient for this reaction in vitro. Activity is much higher with UDP-glucose, and the enzyme has a very marked preference for PsrP substrate that has already been modified by GlcNAc and glucose. In vitro has hydrolytic activity against UDP-galactose and to a lesser extent against UDP-glucose. In terms of biological role, also catalyzes the fourth step in glycosylation of PsrP in this bacteria. Can transfer the sugar from both UDP-glucose and UDP-galactose to the terminal sugar moiety of PsrP-GlcNAc-Glc-Glc and PsrP-GlcNAc-Glc-Gal; the C-terminal GT-D domain is also sufficient for this reaction in vitro (using truncated substrates with glycosylated PsrP SSR1). The N-terminal GT-D domain can transfer galactose from UDP-galactose to PsrP-GlcNAc-Glc-Gal or PsrP-GlcNAc-Glc-Glc in the fourth step. This chain is Glycosyltransferase GlyD, found in Streptococcus pneumoniae serotype 4 (strain ATCC BAA-334 / TIGR4).